The sequence spans 1966 residues: Alpha-protein kinase 2 (1966 aa).

6 disordered regions span residues Asn-23–Leu-65, Ala-211–Lys-231, Leu-1211–Asp-1259, Ser-1303–Gly-1365, Lys-1386–Lys-1423, and Asn-1437–Pro-1463. Positions Ala-211–Asn-227 are enriched in polar residues. A compositionally biased stretch (low complexity) spans Leu-1211–Asp-1221. Basic and acidic residues predominate over residues Ser-1325 to Gln-1342. Over residues Gln-1388–Gln-1397 the composition is skewed to basic residues. Basic and acidic residues predominate over residues Pro-1401–Gln-1417. The 83-residue stretch at Pro-1577–Ser-1659 folds into the Ig-like domain. A disulfide bridge links Cys-1599 with Cys-1649. Residues Lys-1702 to Leu-1934 form the Alpha-type protein kinase domain. Residues Lys-1937–Ser-1966 form a disordered region.

This sequence belongs to the protein kinase superfamily. Alpha-type protein kinase family. ALPK subfamily. Expressed in developing cardiac tissue.

It is found in the basolateral cell membrane. It catalyses the reaction L-seryl-[protein] + ATP = O-phospho-L-seryl-[protein] + ADP + H(+). The enzyme catalyses L-threonyl-[protein] + ATP = O-phospho-L-threonyl-[protein] + ADP + H(+). Protein kinase that recognizes phosphorylation sites in which the surrounding peptides have an alpha-helical conformation. Regulates cardiac development and cardiomyocyte differentiation by negatively regulating Wnt/beta-catenin signaling. The polypeptide is Alpha-protein kinase 2 (alpk2) (Danio rerio (Zebrafish)).